A 963-amino-acid chain; its full sequence is Longitudinals lacking protein, isoforms J/P/Q/S/Z (963 aa).

The BTB domain occupies 32 to 97 (VDCTLAAEGK…MYRGEVNISQ (66 aa)). Disordered regions lie at residues 115-200 (LSDN…SSVL), 228-340 (SSGP…ASAS), 447-469 (DAQQ…RIRV), and 482-520 (GKSS…VSTT). 4 stretches are compositionally biased toward low complexity: residues 162–175 (SGDV…SSSP), 228–251 (SSGP…LTST), 263–293 (TSST…QTTS), and 329–340 (NSATGPNPASAS). Over residues 491–512 (KLTQSKKSLISDAKTTNKTSTP) the composition is skewed to polar residues. The segment at 849–871 (WVCRNCNRTYKWKNSLKCHLKNE) adopts a C2H2-type 1; degenerate zinc-finger fold. The C2H2-type 2; degenerate zinc-finger motif lies at 878–901 (YFCSKMCGYATNVHSNLKRHLNTK). Residues 900–963 (TKCRDREKDA…YTLVFQNDSA (64 aa)) form a disordered region. Basic and acidic residues predominate over residues 901–915 (KCRDREKDADDEKKP). Residues 937-953 (SSSNNNNNGGGSSTSST) show a composition bias toward low complexity. The segment covering 954 to 963 (YTLVFQNDSA) has biased composition (polar residues).

As to expression, by stage 11, isoform Q, isoform P and isoform Z are expressed throughout the mesoderm. From stage 15, expression of isoform P expands to all tissues, whereas expression of isoform Z and isoform Q becomes restricted during later stages; starting from stage 14 to 16, isoform Z is expressed in muscle, and isoform Q and isoform Z are expressed in the CNS. For some isoforms, expression is also seen in specific types of cells in the embryo; isoform Z is expressed in the ventral furrow at stage 5, and isoform Q is expressed around the tracheal pits at stage 11. Isoform Z also shows transient enrichment in a dorsal cell layer in the CNS at stages 13 and 14.

The protein resides in the nucleus. Functionally, putative transcription factor required for axon growth and guidance in the central and peripheral nervous systems. Repels CNS axons away from the midline by promoting the expression of the midline repellent sli and its receptor robo. This is Longitudinals lacking protein, isoforms J/P/Q/S/Z from Drosophila melanogaster (Fruit fly).